Reading from the N-terminus, the 199-residue chain is Recombination protein RecR (199 aa).

The C4-type zinc-finger motif lies at C57 to C72. The 96-residue stretch at S80–P175 folds into the Toprim domain.

This sequence belongs to the RecR family.

Its function is as follows. May play a role in DNA repair. It seems to be involved in an RecBC-independent recombinational process of DNA repair. It may act with RecF and RecO. This is Recombination protein RecR from Alkalilimnicola ehrlichii (strain ATCC BAA-1101 / DSM 17681 / MLHE-1).